We begin with the raw amino-acid sequence, 582 residues long: DNA mismatch repair protein MutL (582 aa).

The protein belongs to the DNA mismatch repair MutL/HexB family.

This protein is involved in the repair of mismatches in DNA. It is required for dam-dependent methyl-directed DNA mismatch repair. May act as a 'molecular matchmaker', a protein that promotes the formation of a stable complex between two or more DNA-binding proteins in an ATP-dependent manner without itself being part of a final effector complex. This Acidiphilium cryptum (strain JF-5) protein is DNA mismatch repair protein MutL.